A 761-amino-acid chain; its full sequence is uncharacterized protein (761 aa).

Position 1 is an N-acetylmethionine (methionine 1). Disordered stretches follow at residues 1–82 (MEHQ…SSSS), 229–320 (SNII…SALA), and 590–640 (FNRA…PEQQ). A compositionally biased stretch (polar residues) spans 13–27 (NSGSNRVTVYNGTTL). Low complexity predominate over residues 28 to 45 (PTMPKSATPTSSSTTVTT). Polar residues-rich tracts occupy residues 244–259 (TPVS…SSPE), 266–276 (NTTSSSSTSDH), 590–604 (FNRA…STDD), and 627–640 (SKNS…PEQQ).

In terms of processing, phosphorylated by CDC28.

This is an uncharacterized protein from Saccharomyces cerevisiae (strain ATCC 204508 / S288c) (Baker's yeast).